A 203-amino-acid chain; its full sequence is MRLFVGLGNPGARYAANRHNIGFMALDAVARRHRAAPWRRKFQGEASEAVIGTERVLLLKPETYMNESGRAVAEAQRFYKIALDDVVVFHDELDLAPAKVRVKKGGGNAGHNGLRSITAQCGNEYWRVRLGIGHPGDKALVHAYVLNDFAKAERPWVDDLCDALADHAALLAAGEDANFQNRIHLALQGRGWDDVKRVGDKQA.

TRNA is bound at residue Tyr14. The Proton acceptor role is filled by His19. Positions 64, 66, and 112 each coordinate tRNA.

It belongs to the PTH family. Monomer.

It is found in the cytoplasm. It carries out the reaction an N-acyl-L-alpha-aminoacyl-tRNA + H2O = an N-acyl-L-amino acid + a tRNA + H(+). In terms of biological role, hydrolyzes ribosome-free peptidyl-tRNAs (with 1 or more amino acids incorporated), which drop off the ribosome during protein synthesis, or as a result of ribosome stalling. Its function is as follows. Catalyzes the release of premature peptidyl moieties from peptidyl-tRNA molecules trapped in stalled 50S ribosomal subunits, and thus maintains levels of free tRNAs and 50S ribosomes. The chain is Peptidyl-tRNA hydrolase from Methylobacterium sp. (strain 4-46).